Reading from the N-terminus, the 640-residue chain is Threonine--tRNA ligase (640 aa).

A TGS domain is found at 1–61; that stretch reads MPIITLPNGD…TEDSTLQIIT (61 aa). The interval 242–533 is catalytic; that stretch reads DHRKIGKALD…LIEHYAGFMP (292 aa). Positions 333, 384, and 510 each coordinate Zn(2+).

It belongs to the class-II aminoacyl-tRNA synthetase family. Homodimer. Zn(2+) is required as a cofactor.

It is found in the cytoplasm. The catalysed reaction is tRNA(Thr) + L-threonine + ATP = L-threonyl-tRNA(Thr) + AMP + diphosphate + H(+). In terms of biological role, catalyzes the attachment of threonine to tRNA(Thr) in a two-step reaction: L-threonine is first activated by ATP to form Thr-AMP and then transferred to the acceptor end of tRNA(Thr). Also edits incorrectly charged L-seryl-tRNA(Thr). This Acinetobacter baumannii (strain AB0057) protein is Threonine--tRNA ligase.